The primary structure comprises 241 residues: Probable transcriptional regulator PhnF (241 aa).

The HTH gntR-type domain occupies 11–78 (PTRYQEIAAK…QGVGVLVLMR (68 aa)). Residues 38 to 57 (EQQLAARFEVNRHTLRRAID) constitute a DNA-binding region (H-T-H motif).

Its function is as follows. Belongs to an operon involved in alkylphosphonate uptake and C-P lyase. Exact function not known. By similarity could be a transcriptional regulator. This is Probable transcriptional regulator PhnF (phnF) from Escherichia coli (strain K12).